Here is a 207-residue protein sequence, read N- to C-terminus: Small ribosomal subunit protein uS4c (207 aa).

An S4 RNA-binding domain is found at 92–153; the sequence is MRLDNILFRL…PKIYQSIITK (62 aa).

Belongs to the universal ribosomal protein uS4 family. As to quaternary structure, part of the 30S ribosomal subunit. Contacts protein S5. The interaction surface between S4 and S5 is involved in control of translational fidelity.

It is found in the plastid. The protein resides in the chloroplast. In terms of biological role, one of the primary rRNA binding proteins, it binds directly to 16S rRNA where it nucleates assembly of the body of the 30S subunit. Its function is as follows. With S5 and S12 plays an important role in translational accuracy. The protein is Small ribosomal subunit protein uS4c (rps4) of Equisetum bogotense (Horsetail).